Reading from the N-terminus, the 278-residue chain is Methyltransferase adrK (278 aa).

Residues 124–125 (DL), 151–152 (DV), and 152–153 (VL) each bind S-adenosyl-L-methionine.

The protein belongs to the class I-like SAM-binding methyltransferase superfamily. As to quaternary structure, homodimer.

It functions in the pathway secondary metabolite biosynthesis; terpenoid biosynthesis. In terms of biological role, methyltransferase; part of the gene cluster that mediates the biosynthesis of andrastins, meroterpenoid compounds that exhibit inhibitory activity against ras farnesyltransferase, suggesting that they could be promising leads for antitumor agents. The first step of the pathway is the synthesis of 3,5-dimethylorsellinic acid (DMOA) by the polyketide synthase adrD via condensation of one acetyl-CoA starter unit with 3 malonyl-CoA units and 2 methylations. DMAO is then converted to farnesyl-DMAO by the prenyltransferase adrG. The methyltransferase adrK catalyzes the methylation of the carboxyl group of farnesyl-DMAO to farnesyl-DMAO methyl ester which is further converted to epoxyfarnesyl-DMAO methyl ester by the FAD-dependent monooxygenase adrH. The terpene cyclase adrI then catalyzes the carbon skeletal rearrangement to generate the andrastin E, the first compound in the pathway having the andrastin scaffold, with the tetracyclic ring system. The post-cyclization tailoring enzymes adrF, adrE, adrJ, and adrA, are involved in the conversion of andrastin E into andrastin A. The short chain dehydrogenase adrF is responsible for the oxidation of the C-3 a hydroxyl group of andrastin E to yield the corresponding ketone, andrastin D. The ketoreductase adrE stereoselectively reduces the carbonyl moiety to reverse the stereochemistry of the C-3 position to yield andrastin F. The acetyltransferase adrJ is the acetyltransferase that attaches the acetyl group to the C-3 hydroxyl group of andrastin F to yield andrastin C. Finally, the cytochrome P450 monooxygenase adrA catalyzes two sequential oxidation reactions of the C-23 methyl group, to generate the corresponding alcohol andrastin B, and aldehyde andrastin A. This chain is Methyltransferase adrK, found in Penicillium roqueforti.